A 332-amino-acid chain; its full sequence is Anthranilate phosphoribosyltransferase (332 aa).

5-phospho-alpha-D-ribose 1-diphosphate contacts are provided by residues Gly-79, 82-83 (GD), Ser-87, 89-92 (NIST), 107-115 (KHGNRSVSS), and Ser-119. Gly-79 serves as a coordination point for anthranilate. Residue Ser-91 coordinates Mg(2+). Position 110 (Asn-110) interacts with anthranilate. Arg-165 is a binding site for anthranilate. 2 residues coordinate Mg(2+): Asp-223 and Glu-224.

It belongs to the anthranilate phosphoribosyltransferase family. In terms of assembly, homodimer. The cofactor is Mg(2+).

It catalyses the reaction N-(5-phospho-beta-D-ribosyl)anthranilate + diphosphate = 5-phospho-alpha-D-ribose 1-diphosphate + anthranilate. The protein operates within amino-acid biosynthesis; L-tryptophan biosynthesis; L-tryptophan from chorismate: step 2/5. Its function is as follows. Catalyzes the transfer of the phosphoribosyl group of 5-phosphorylribose-1-pyrophosphate (PRPP) to anthranilate to yield N-(5'-phosphoribosyl)-anthranilate (PRA). The polypeptide is Anthranilate phosphoribosyltransferase (Photorhabdus laumondii subsp. laumondii (strain DSM 15139 / CIP 105565 / TT01) (Photorhabdus luminescens subsp. laumondii)).